The chain runs to 183 residues: ATP-dependent protease subunit HslV (183 aa).

Residue Thr-13 is part of the active site. Gly-168, Cys-171, and Thr-174 together coordinate Na(+).

Belongs to the peptidase T1B family. HslV subfamily. As to quaternary structure, a double ring-shaped homohexamer of HslV is capped on each side by a ring-shaped HslU homohexamer. The assembly of the HslU/HslV complex is dependent on binding of ATP.

It localises to the cytoplasm. It catalyses the reaction ATP-dependent cleavage of peptide bonds with broad specificity.. With respect to regulation, allosterically activated by HslU binding. Functionally, protease subunit of a proteasome-like degradation complex believed to be a general protein degrading machinery. In Xylella fastidiosa (strain M23), this protein is ATP-dependent protease subunit HslV.